Consider the following 177-residue polypeptide: Large ribosomal subunit protein uL10 (177 aa).

This sequence belongs to the universal ribosomal protein uL10 family. As to quaternary structure, part of the ribosomal stalk of the 50S ribosomal subunit. The N-terminus interacts with L11 and the large rRNA to form the base of the stalk. The C-terminus forms an elongated spine to which L12 dimers bind in a sequential fashion forming a multimeric L10(L12)X complex.

Functionally, forms part of the ribosomal stalk, playing a central role in the interaction of the ribosome with GTP-bound translation factors. The chain is Large ribosomal subunit protein uL10 from Variovorax paradoxus (strain S110).